The primary structure comprises 194 residues: Probable GTP-binding protein EngB (194 aa).

The 172-residue stretch at 23 to 194 (DKMEFAFVGR…LNFMEEKLNN (172 aa)) folds into the EngB-type G domain. Residues 31–38 (GRSNVGKS), 58–62 (GRTQL), 76–79 (DLPG), 142–145 (TKID), and 173–175 (HSS) each bind GTP. Residues Ser-38 and Thr-60 each contribute to the Mg(2+) site.

Belongs to the TRAFAC class TrmE-Era-EngA-EngB-Septin-like GTPase superfamily. EngB GTPase family. Mg(2+) serves as cofactor.

Its function is as follows. Necessary for normal cell division and for the maintenance of normal septation. The chain is Probable GTP-binding protein EngB from Fusobacterium nucleatum subsp. nucleatum (strain ATCC 25586 / DSM 15643 / BCRC 10681 / CIP 101130 / JCM 8532 / KCTC 2640 / LMG 13131 / VPI 4355).